The chain runs to 133 residues: Phosphoribosyl-AMP cyclohydrolase (133 aa).

Residue Asp77 coordinates Mg(2+). Residue Cys78 participates in Zn(2+) binding. Positions 79 and 81 each coordinate Mg(2+). Positions 95 and 102 each coordinate Zn(2+).

This sequence belongs to the PRA-CH family. As to quaternary structure, homodimer. It depends on Mg(2+) as a cofactor. Requires Zn(2+) as cofactor.

The protein localises to the cytoplasm. The catalysed reaction is 1-(5-phospho-beta-D-ribosyl)-5'-AMP + H2O = 1-(5-phospho-beta-D-ribosyl)-5-[(5-phospho-beta-D-ribosylamino)methylideneamino]imidazole-4-carboxamide. It functions in the pathway amino-acid biosynthesis; L-histidine biosynthesis; L-histidine from 5-phospho-alpha-D-ribose 1-diphosphate: step 3/9. Catalyzes the hydrolysis of the adenine ring of phosphoribosyl-AMP. The chain is Phosphoribosyl-AMP cyclohydrolase from Thiobacillus denitrificans (strain ATCC 25259 / T1).